Reading from the N-terminus, the 182-residue chain is Large ribosomal subunit protein bL25 (182 aa).

The protein belongs to the bacterial ribosomal protein bL25 family. CTC subfamily. In terms of assembly, part of the 50S ribosomal subunit; part of the 5S rRNA/L5/L18/L25 subcomplex. Contacts the 5S rRNA. Binds to the 5S rRNA independently of L5 and L18.

This is one of the proteins that binds to the 5S RNA in the ribosome where it forms part of the central protuberance. This Borreliella afzelii (strain PKo) (Borrelia afzelii) protein is Large ribosomal subunit protein bL25.